A 953-amino-acid polypeptide reads, in one-letter code: Mannosylglycoprotein endo-beta-mannosidase (953 aa).

The Proton donor role is filled by E461. E553 acts as the Nucleophile in catalysis.

It belongs to the glycosyl hydrolase 2 family. As to quaternary structure, heterotrimer of 31 kDa, 28 kDa and 42 kDa subunits. The mature enzyme is proteotically cleaved into 3 subunits of 31 kDa, 28 kDa and 42 kDa. Ubiquitously expressed.

It catalyses the reaction Hydrolysis of the alpha-D-mannosyl-(1-&gt;6)-beta-D-mannosyl-(1-&gt;4)-N-acetyl-beta-D-glucosaminyl-(1-&gt;4)-N-acetyl-beta-D-glucosaminyl sequence of glycoprotein to alpha-D-mannosyl-(1-&gt;6)-D-mannose and N-acetyl-beta-D-glucosaminyl-(1-&gt;4)-N-acetyl-beta-D-glucosaminyl sequences.. In terms of biological role, glycosidase that specifically hydrolyzes the Man-beta-1,4-GlcNAc linkage in the trimannosyl core structure of N-glycans. Does not hydrolyzes pyridylamino derivatives sugar chains containing Man-alpha-1,3-Man-beta or Xylose-beta-1,2-Man-beta. This is Mannosylglycoprotein endo-beta-mannosidase (EBM) from Lilium longiflorum (Trumpet lily).